The chain runs to 248 residues: UPF0736 protein BC_1176 (248 aa).

Belongs to the UPF0736 family.

The protein is UPF0736 protein BC_1176 of Bacillus cereus (strain ATCC 14579 / DSM 31 / CCUG 7414 / JCM 2152 / NBRC 15305 / NCIMB 9373 / NCTC 2599 / NRRL B-3711).